The sequence spans 735 residues: Coiled-coil quantitatively-enriched protein 1 (735 aa).

Positions 514-719 (AAVQYLQRRL…TLKILEQKSL (206 aa)) form a coiled coil.

Interacts (during meiosis) with pcp1. Interacts with clr3, pot1, taz1 and tpz1.

The protein resides in the nucleus. It localises to the nucleoplasm. Its subcellular location is the chromosome. The protein localises to the telomere. Component of the meiotic bouquet that facilitates meiotic nuclear reorganization of the telomeres to the centrosome. Links telomeres to the meiotic centrosome component pcp1. Essential for the formation of normal telomere clusters during meiotic prophase. Required for telomere length regulation and chromosome segregation. Required for proper positioning of nucleosomes at heterochromatic loci and for transcriptional gene silencing (TGS) function of the Snf2/Hdac-containing repressor complex (SHREC). This Schizosaccharomyces pombe (strain 972 / ATCC 24843) (Fission yeast) protein is Coiled-coil quantitatively-enriched protein 1 (ccq1).